The sequence spans 354 residues: MTLFESINAGGTQILGVAWPTVWALVRILVVAVVILLCVAYLILWERKLIGWMHVRLGPNRVGPAGLLQPIADVLKLLLKEVIQPTQASRWVYLVAPVMVVVPAFAVWAVIPFQAGAVLGDINAGLLYAISISSVGVYGVILAGWASNSKYAFLGAMRAAAQMVSYEVSMGFALVVVMMTAGTMNLSDIVGSQMRGIFASHGVTFLSWNWLPLLPAFVVYFVSGIAETNRHPFDVVEGESEIVAGHMIDYSGMAFALFFLAEYINMIVISALASILFLGGWSAPFEFLSFIPGIVWLVLKVFLLLSVFIWVRATFPRYRYDQIMRLGWKVFLPVTVIWVVVVGFWIMSPLNIWN.

8 helical membrane passes run 25–45, 91–111, 126–146, 170–190, 205–225, 257–277, 290–310, and 330–350; these read LVRILVVAVVILLCVAYLILW, WVYLVAPVMVVVPAFAVWAVI, LLYAISISSVGVYGVILAGWA, MGFALVVVMMTAGTMNLSDIV, FLSWNWLPLLPAFVVYFVSGI, LFFLAEYINMIVISALASILF, FIPGIVWLVLKVFLLLSVFIW, and VFLPVTVIWVVVVGFWIMSPL.

This sequence belongs to the complex I subunit 1 family. In terms of assembly, NDH-1 is composed of 14 different subunits. Subunits NuoA, H, J, K, L, M, N constitute the membrane sector of the complex.

The protein localises to the cell inner membrane. It carries out the reaction a quinone + NADH + 5 H(+)(in) = a quinol + NAD(+) + 4 H(+)(out). In terms of biological role, NDH-1 shuttles electrons from NADH, via FMN and iron-sulfur (Fe-S) centers, to quinones in the respiratory chain. The immediate electron acceptor for the enzyme in this species is believed to be ubiquinone. Couples the redox reaction to proton translocation (for every two electrons transferred, four hydrogen ions are translocated across the cytoplasmic membrane), and thus conserves the redox energy in a proton gradient. This subunit may bind ubiquinone. This chain is NADH-quinone oxidoreductase subunit H, found in Paraburkholderia phymatum (strain DSM 17167 / CIP 108236 / LMG 21445 / STM815) (Burkholderia phymatum).